The following is a 781-amino-acid chain: Molybdenum cofactor sulfurase (781 aa).

Lys-246 carries the N6-(pyridoxal phosphate)lysine modification. The active site involves Cys-413. The 147-residue stretch at 635 to 781 (LRLLRQSGQR…MTCGDVVLVE (147 aa)) folds into the MOSC domain. Ser-734 bears the Phosphoserine mark.

It belongs to the class-V pyridoxal-phosphate-dependent aminotransferase family. MOCOS subfamily. The cofactor is pyridoxal 5'-phosphate.

It carries out the reaction Mo-molybdopterin + L-cysteine + AH2 = thio-Mo-molybdopterin + L-alanine + A + H2O. It participates in cofactor biosynthesis; molybdopterin biosynthesis. Its function is as follows. Sulfurates the molybdenum cofactor. Sulfation of molybdenum is essential for xanthine dehydrogenase (XDH) and aldehyde oxidase (ADO) enzymes in which molybdenum cofactor is liganded by 1 oxygen and 1 sulfur atom in active form. In Drosophila melanogaster (Fruit fly), this protein is Molybdenum cofactor sulfurase.